Here is a 487-residue protein sequence, read N- to C-terminus: Putative B3 domain-containing protein At1g78640 (487 aa).

DNA-binding regions (TF-B3) lie at residues 171-269 (RLLL…QQGT) and 379-474 (RLTL…LFRV).

It localises to the nucleus. The chain is Putative B3 domain-containing protein At1g78640 from Arabidopsis thaliana (Mouse-ear cress).